A 444-amino-acid chain; its full sequence is C4-dicarboxylate transport protein (444 aa).

9 helical membrane-spanning segments follow: residues 17–37, 57–77, 92–112, 139–159, 161–181, 201–221, 234–254, 320–340, and 368–388; these read PFYT…ILLG, LVKM…IAGM, LYFL…ANVV, EQSI…GAFA, GDIL…AMVG, LVAI…AFTI, MLIG…LGAV, IYMT…LSWG, and AATL…ILGI.

Belongs to the dicarboxylate/amino acid:cation symporter (DAACS) (TC 2.A.23) family.

The protein localises to the cell inner membrane. In terms of biological role, responsible for the transport of dicarboxylates such as succinate, fumarate, and malate from the periplasm across the membrane. This Rhizobium johnstonii (strain DSM 114642 / LMG 32736 / 3841) (Rhizobium leguminosarum bv. viciae) protein is C4-dicarboxylate transport protein.